The primary structure comprises 291 residues: Phosphatidylcholine-sterol acyltransferase (291 aa).

N-linked (GlcNAc...) asparagine glycosylation is present at asparagine 28. The active-site Nucleophile is serine 125. The N-linked (GlcNAc...) asparagine glycan is linked to asparagine 179. Cysteines 220 and 263 form a disulfide. The active-site Charge relay system is the aspartate 252. The N-linked (GlcNAc...) asparagine glycan is linked to asparagine 280.

The protein belongs to the AB hydrolase superfamily. Lipase family.

The protein localises to the secreted. The catalysed reaction is a sterol + a 1,2-diacyl-sn-glycero-3-phosphocholine = a sterol ester + a 1-acyl-sn-glycero-3-phosphocholine. Its activity is regulated as follows. APOA1 is the most potent activator in plasma. Also activated by APOE, APOC1 and APOA4. In terms of biological role, central enzyme in the extracellular metabolism of plasma lipoproteins. Synthesized mainly in the liver and secreted into plasma where it converts cholesterol and phosphatidylcholines (lecithins) to cholesteryl esters and lysophosphatidylcholines on the surface of high and low density lipoproteins (HDLs and LDLs). The cholesterol ester is then transported back to the liver. Has a preference for plasma 16:0-18:2 or 18:O-18:2 phosphatidylcholines. Also produced in the brain by primary astrocytes, and esterifies free cholesterol on nascent APOE-containing lipoproteins secreted from glia and influences cerebral spinal fluid (CSF) APOE- and APOA1 levels. Together with APOE and the cholesterol transporter ABCA1, plays a key role in the maturation of glial-derived, nascent lipoproteins. Required for remodeling high-density lipoprotein particles into their spherical forms. This chain is Phosphatidylcholine-sterol acyltransferase (LCAT), found in Myodes glareolus (Bank vole).